The following is a 1420-amino-acid chain: Vacuolar protein sorting/targeting protein 10 (1420 aa).

Positions 1-21 (MILRRLLLAGSLLLATAFTSA) are cleaved as a signal peptide. The Lumenal segment spans residues 22 to 1284 (KKADGPKISV…FFKKHPRLRG (1263 aa)). The stretch at 61 to 71 (YVSRDAGANWD) is one BNR 1 repeat. Asparagine 271 and asparagine 321 each carry an N-linked (GlcNAc...) asparagine glycan. BNR repeat units lie at residues 377–386 (ISFDDGRTFQ) and 644–654 (FLSRDHGKKWK). Asparagine 893 carries an N-linked (GlcNAc...) asparagine glycan. BNR repeat units lie at residues 1028-1038 (FITRDAGITWE) and 1070-1079 (YSLDEGRSWK). A helical membrane pass occupies residues 1285 to 1305 (IGLFFVILIPICLAATAGYYV). Residues 1306–1331 (YNHWDGKFGRIRLGETGSGGLFDRDS) are Cytoplasmic-facing. Residues 1332–1352 (LLVSIPVSMVAGVVAVITALP) form a helical membrane-spanning segment. At 1353–1420 (LLVSSLWRSV…EEGDERNGQV (68 aa)) the chain is on the lumenal side. Acidic residues predominate over residues 1397–1414 (DEDELLGTDDFDDDEEGD). The segment at 1397–1420 (DEDELLGTDDFDDDEEGDERNGQV) is disordered.

The protein belongs to the VPS10-related sortilin family.

Its subcellular location is the golgi apparatus. It localises to the trans-Golgi network membrane. It is found in the prevacuolar compartment membrane. Functions as a sorting receptor in the Golgi compartment required for the intracellular sorting and delivery of soluble vacuolar proteins, like carboxypeptidase Y (CPY) and proteinase A. Executes multiple rounds of sorting by cycling between the late Golgi and a prevacuolar endosome-like compartment. In Ajellomyces capsulatus (strain H143) (Darling's disease fungus), this protein is Vacuolar protein sorting/targeting protein 10 (VPS10).